We begin with the raw amino-acid sequence, 343 residues long: Glycerol-3-phosphate dehydrogenase [NAD(P)+] (343 aa).

4 residues coordinate NADPH: Ser22, Tyr23, His43, and Lys117. Residues Lys117, Gly146, and Thr148 each coordinate sn-glycerol 3-phosphate. Residue Ala150 participates in NADPH binding. Sn-glycerol 3-phosphate is bound by residues Lys202, Asp255, Ser265, Arg266, and Asn267. Lys202 acts as the Proton acceptor in catalysis. Arg266 serves as a coordination point for NADPH. Positions 290 and 292 each coordinate NADPH.

Belongs to the NAD-dependent glycerol-3-phosphate dehydrogenase family.

It is found in the cytoplasm. It carries out the reaction sn-glycerol 3-phosphate + NAD(+) = dihydroxyacetone phosphate + NADH + H(+). It catalyses the reaction sn-glycerol 3-phosphate + NADP(+) = dihydroxyacetone phosphate + NADPH + H(+). The protein operates within membrane lipid metabolism; glycerophospholipid metabolism. Its function is as follows. Catalyzes the reduction of the glycolytic intermediate dihydroxyacetone phosphate (DHAP) to sn-glycerol 3-phosphate (G3P), the key precursor for phospholipid synthesis. The sequence is that of Glycerol-3-phosphate dehydrogenase [NAD(P)+] from Aliivibrio fischeri (strain ATCC 700601 / ES114) (Vibrio fischeri).